The sequence spans 316 residues: Transcription termination/antitermination protein NusG (316 aa).

It belongs to the NusG family.

Functionally, participates in transcription elongation, termination and antitermination. The chain is Transcription termination/antitermination protein NusG from Mycoplasma genitalium (strain ATCC 33530 / DSM 19775 / NCTC 10195 / G37) (Mycoplasmoides genitalium).